The sequence spans 321 residues: Phospho-N-acetylmuramoyl-pentapeptide-transferase (321 aa).

10 consecutive transmembrane segments (helical) span residues 1 to 21, 50 to 70, 76 to 96, 112 to 132, 140 to 160, 176 to 196, 200 to 220, 225 to 245, 250 to 270, and 300 to 320; these read MLFILAVIALLITFILVPILI, MGGLTFLISIIITSIIAIFFV, IILLLFVTIGFGLIGFIDDYI, FLAQIAIAVVFFLLSDVFHLV, IPFTNISIPLSFAYVIFIVFW, GLATGLSIIGFTMYAIMSFVL, AIGAFCIIMIFALLGFLPYNL, VFMGDTGSLALGGIFATISIM, LSLLLIGLVFVIETASVMLQV, and VVTVFWTAGLISGLIGLWIGV.

Belongs to the glycosyltransferase 4 family. MraY subfamily. Requires Mg(2+) as cofactor.

The protein resides in the cell membrane. It carries out the reaction UDP-N-acetyl-alpha-D-muramoyl-L-alanyl-gamma-D-glutamyl-L-lysyl-D-alanyl-D-alanine + di-trans,octa-cis-undecaprenyl phosphate = Mur2Ac(oyl-L-Ala-gamma-D-Glu-L-Lys-D-Ala-D-Ala)-di-trans,octa-cis-undecaprenyl diphosphate + UMP. The protein operates within cell wall biogenesis; peptidoglycan biosynthesis. Functionally, catalyzes the initial step of the lipid cycle reactions in the biosynthesis of the cell wall peptidoglycan: transfers peptidoglycan precursor phospho-MurNAc-pentapeptide from UDP-MurNAc-pentapeptide onto the lipid carrier undecaprenyl phosphate, yielding undecaprenyl-pyrophosphoryl-MurNAc-pentapeptide, known as lipid I. This Staphylococcus haemolyticus (strain JCSC1435) protein is Phospho-N-acetylmuramoyl-pentapeptide-transferase.